Consider the following 157-residue polypeptide: MLLTGKLYKEEKQKFYDAQNGKCLICQRELNPDVQANHLDHDHELNGPKAGKVRGLLCNLCNAAEGQMKHKFNRSGLKGQGVDYLEWLENLLTYLKSDYTQNNIHPNFVGDKSKEFSRLGKEEMMAEMLQRGFEYNESDTKTQLIASFKKQLRKSLK.

Zn(2+) contacts are provided by Cys23 and Cys26. Asp40 lines the Ca(2+) pocket. The Zn(2+) site is built by Cys58 and Cys61. Position 62 (Asn62) interacts with Ca(2+).

Homodimer. Ca(2+) serves as cofactor. It depends on Zn(2+) as a cofactor.

Functionally, cleaves DNA cruciform and Y-structures as well as heteroduplex loops. Resolves Holliday junctions, recognizes a broad spectrum of DNA substrates ranging from branched DNAs to single base mismatches. The sequence is that of Recombination endonuclease VII (49) from Enterobacteria phage T4 (Bacteriophage T4).